A 325-amino-acid polypeptide reads, in one-letter code: Elongation factor Ts, mitochondrial (325 aa).

The N-terminal 45 residues, 1 to 45 (MSLLRSLRVFLVARTGSYPAGSLLRQSPQPRHTFYAGPRLSASAS), are a transit peptide targeting the mitochondrion. N6-succinyllysine is present on residues Lys-76, Lys-133, and Lys-192. Phosphoserine is present on Ser-270. Phosphothreonine is present on Thr-324.

The protein belongs to the EF-Ts family. Expressed in all tissues, with the highest levels of expression in skeletal muscle, liver and kidney.

Its subcellular location is the mitochondrion. Its function is as follows. Associates with the EF-Tu.GDP complex and induces the exchange of GDP to GTP. It remains bound to the aminoacyl-tRNA.EF-Tu.GTP complex up to the GTP hydrolysis stage on the ribosome. This Homo sapiens (Human) protein is Elongation factor Ts, mitochondrial.